A 440-amino-acid polypeptide reads, in one-letter code: Ribosomal protein uS12 methylthiotransferase RimO (440 aa).

The 116-residue stretch at 2–117 folds into the MTTase N-terminal domain; the sequence is VKVGFVSLGC…LPNVIKKLYE (116 aa). 6 residues coordinate [4Fe-4S] cluster: C11, C47, C80, C156, C160, and C163. In terms of domain architecture, Radical SAM core spans 142 to 371; it reads ATPKFYAYIK…LNLQRKISLE (230 aa). The TRAM domain maps to 374–440; the sequence is RKRISKKYEV…FEYDLVGEVI (67 aa).

The protein belongs to the methylthiotransferase family. RimO subfamily. [4Fe-4S] cluster is required as a cofactor.

It is found in the cytoplasm. It catalyses the reaction L-aspartate(89)-[ribosomal protein uS12]-hydrogen + (sulfur carrier)-SH + AH2 + 2 S-adenosyl-L-methionine = 3-methylsulfanyl-L-aspartate(89)-[ribosomal protein uS12]-hydrogen + (sulfur carrier)-H + 5'-deoxyadenosine + L-methionine + A + S-adenosyl-L-homocysteine + 2 H(+). In terms of biological role, catalyzes the methylthiolation of an aspartic acid residue of ribosomal protein uS12. The protein is Ribosomal protein uS12 methylthiotransferase RimO of Caldicellulosiruptor saccharolyticus (strain ATCC 43494 / DSM 8903 / Tp8T 6331).